Reading from the N-terminus, the 434-residue chain is Glutamyl-tRNA reductase (434 aa).

Substrate-binding positions include Thr52–Arg55, Ser115, Glu120–Gln122, and Gln126. Cys53 (nucleophile) is an active-site residue. Gly195–Ile200 is a binding site for NADP(+).

This sequence belongs to the glutamyl-tRNA reductase family. Homodimer.

It carries out the reaction (S)-4-amino-5-oxopentanoate + tRNA(Glu) + NADP(+) = L-glutamyl-tRNA(Glu) + NADPH + H(+). It functions in the pathway porphyrin-containing compound metabolism; protoporphyrin-IX biosynthesis; 5-aminolevulinate from L-glutamyl-tRNA(Glu): step 1/2. Functionally, catalyzes the NADPH-dependent reduction of glutamyl-tRNA(Glu) to glutamate 1-semialdehyde (GSA). The chain is Glutamyl-tRNA reductase from Cupriavidus necator (strain ATCC 17699 / DSM 428 / KCTC 22496 / NCIMB 10442 / H16 / Stanier 337) (Ralstonia eutropha).